The primary structure comprises 249 residues: MTGENTGDNPRRVLLKLSGEAFGGGKVGIDTTVVRRIAEEIVPAVKQGVQVAIVVGGGNFFRGAELQQAGIDRSRGDYMGMLGTVMNCLALQDFLEQEGQATRVQTAITMGQVAEPYIPLKAIRHLEKGRVVIFGAGAGMPYFSTDTVSIQRSLEIHCDEVLMGKNGVDGVYTADPRKDENAKRFATLSYNRALVDNLAVMDAAALSMARDNKQRIRVFGLEGAGNVTQALLGEEIGTMVSTAESTLAE.

16-19 (KLSG) lines the ATP pocket. Position 57 (Gly-57) interacts with UMP. 2 residues coordinate ATP: Gly-58 and Arg-62. UMP-binding positions include Asp-77 and 138 to 145 (AGMPYFST). Positions 166, 172, and 175 each coordinate ATP.

The protein belongs to the UMP kinase family. Homohexamer.

It localises to the cytoplasm. It carries out the reaction UMP + ATP = UDP + ADP. It functions in the pathway pyrimidine metabolism; CTP biosynthesis via de novo pathway; UDP from UMP (UMPK route): step 1/1. Inhibited by UTP. Functionally, catalyzes the reversible phosphorylation of UMP to UDP. This Bifidobacterium adolescentis (strain ATCC 15703 / DSM 20083 / NCTC 11814 / E194a) protein is Uridylate kinase.